The primary structure comprises 576 residues: Boron transporter 1 (576 aa).

At 1–84 (MSNESTRVTV…SDWVDAFNYR (84 aa)) the chain is on the cytoplasmic side. Residues 19 to 48 (ECAQALERTNDELDRESSVSESRSDEESHE) are disordered. Over residues 26-48 (RTNDELDRESSVSESRSDEESHE) the composition is skewed to basic and acidic residues. A helical membrane pass occupies residues 85-105 (VIPSIVDTYFNNLLPAIAFAQ). Topologically, residues 106–116 (DMFDRTDNSYG) are extracellular. Residues 117–134 (VNEVLLSSAMAGIVFGVL) traverse the membrane as a helical segment. Topologically, residues 135–140 (GGQPLC) are cytoplasmic. The chain crosses the membrane as a helical span at residues 141–160 (IVGVTGPISIFNYTVYEIIK). Topologically, residues 161–165 (PLNTS) are extracellular. The helical transmembrane segment at 166–186 (YFGFMFWICMWSMIFHLVLAF) threads the bilayer. At 187–192 (TNAVCL) the chain is on the cytoplasmic side. Residues 193–213 (LQYVTTFPCDIFGLFINVVYI) traverse the membrane as a helical segment. Residues 214-235 (QKGIQILTRQFSAKSGEKSVQD) are Extracellular-facing. The chain crosses the membrane as a helical span at residues 236–256 (GFASVVVALVMTAFGLFFKLF). The Cytoplasmic portion of the chain corresponds to 257 to 274 (HYYPLFSHRIRTFISDYS). Residues 275-295 (TALSVLFWSSFTHFGGYLHDV) traverse the membrane as a helical segment. At 296–329 (KFKKLPITKAFFPTSKVNRPQNTWLAYEPIPVKD) the chain is on the extracellular side. The helical transmembrane segment at 330 to 350 (VFIALPFGIFLTILFYFDHNV) threads the bilayer. Residues 351–373 (SSLMAQRHQYKLKKPSSFHYDFA) lie on the Cytoplasmic side of the membrane. The chain crosses the membrane as a helical span at residues 374 to 394 (LLGLTTCISGVLGIPAPNGLI). At 395 to 438 (PQAPLHTETLLVRDSNQKVISCVEQRFTNTFQGLMILGTMTRPL) the chain is on the extracellular side. Residues 439 to 459 (LVCLGEIPQAVLSGLFFIMGI) traverse the membrane as a helical segment. Residues 460–495 (NGLMTNSIIQRLVFLFSDPNRRDNTSPLMKVSKKSM) are Cytoplasmic-facing. The helical transmembrane segment at 496–516 (LIFLSFSLTGFAGEFAITNTI) threads the bilayer. Residues 517–518 (AA) lie on the Extracellular side of the membrane. Residues 519-539 (IGFPLVLLLSVLVSFSFAYIF) traverse the membrane as a helical segment. Topologically, residues 540–576 (PTEELKILDTNVAQKFTIKNLLLENIRDAKFCDKHED) are cytoplasmic.

It belongs to the anion exchanger (TC 2.A.31) family.

It localises to the cell membrane. The protein resides in the vacuole membrane. In terms of biological role, functions in boric acid/borate export across the plasma membrane, and thereby protects yeast cells from boron toxicity. Involved in the trafficking of proteins to the vacuole. This Saccharomyces cerevisiae (strain ATCC 204508 / S288c) (Baker's yeast) protein is Boron transporter 1 (BOR1).